Reading from the N-terminus, the 228-residue chain is Large ribosomal subunit protein uL1 (228 aa).

It belongs to the universal ribosomal protein uL1 family. As to quaternary structure, part of the 50S ribosomal subunit.

Functionally, binds directly to 23S rRNA. The L1 stalk is quite mobile in the ribosome, and is involved in E site tRNA release. Its function is as follows. Protein L1 is also a translational repressor protein, it controls the translation of the L11 operon by binding to its mRNA. The chain is Large ribosomal subunit protein uL1 from Clavibacter sepedonicus (Clavibacter michiganensis subsp. sepedonicus).